Consider the following 369-residue polypeptide: tRNA-specific 2-thiouridylase MnmA (369 aa).

ATP-binding positions include 16–23 (AMSGGVDS) and M42. C110 (nucleophile) is an active-site residue. A disulfide bond links C110 and C206. G134 serves as a coordination point for ATP. An interaction with tRNA region spans residues 156–158 (KDQ). Catalysis depends on C206, which acts as the Cysteine persulfide intermediate.

The protein belongs to the MnmA/TRMU family.

The protein localises to the cytoplasm. The enzyme catalyses S-sulfanyl-L-cysteinyl-[protein] + uridine(34) in tRNA + AH2 + ATP = 2-thiouridine(34) in tRNA + L-cysteinyl-[protein] + A + AMP + diphosphate + H(+). In terms of biological role, catalyzes the 2-thiolation of uridine at the wobble position (U34) of tRNA, leading to the formation of s(2)U34. This Orientia tsutsugamushi (strain Boryong) (Rickettsia tsutsugamushi) protein is tRNA-specific 2-thiouridylase MnmA.